A 605-amino-acid chain; its full sequence is Elongation factor 4 (605 aa).

In terms of domain architecture, tr-type G spans 11–193 (KNIRNFSIIA…RLVDVIPAPE (183 aa)). GTP contacts are provided by residues 23 to 28 (DHGKST) and 140 to 143 (NKID).

The protein belongs to the TRAFAC class translation factor GTPase superfamily. Classic translation factor GTPase family. LepA subfamily.

The protein resides in the cell inner membrane. The catalysed reaction is GTP + H2O = GDP + phosphate + H(+). Required for accurate and efficient protein synthesis under certain stress conditions. May act as a fidelity factor of the translation reaction, by catalyzing a one-codon backward translocation of tRNAs on improperly translocated ribosomes. Back-translocation proceeds from a post-translocation (POST) complex to a pre-translocation (PRE) complex, thus giving elongation factor G a second chance to translocate the tRNAs correctly. Binds to ribosomes in a GTP-dependent manner. The sequence is that of Elongation factor 4 from Acinetobacter baylyi (strain ATCC 33305 / BD413 / ADP1).